The sequence spans 213 residues: Kynurenine formamidase (213 aa).

A substrate-binding site is contributed by W18. Residues H48, H52, and D54 each contribute to the Zn(2+) site. The active-site Proton donor/acceptor is the H58. The Zn(2+) site is built by H160 and E172.

This sequence belongs to the Cyclase 1 superfamily. KynB family. Homodimer. The cofactor is Zn(2+).

The enzyme catalyses N-formyl-L-kynurenine + H2O = L-kynurenine + formate + H(+). Its pathway is amino-acid degradation; L-tryptophan degradation via kynurenine pathway; L-kynurenine from L-tryptophan: step 2/2. Its function is as follows. Catalyzes the hydrolysis of N-formyl-L-kynurenine to L-kynurenine, the second step in the kynurenine pathway of tryptophan degradation. The chain is Kynurenine formamidase from Burkholderia pseudomallei (strain 668).